The chain runs to 529 residues: UDP-glycosyltransferase (529 aa).

Residues asparagine 70 and asparagine 420 are each glycosylated (N-linked (GlcNAc...) asparagine). Residues 504–524 (LDLYLVYIALFAVPVGAVRWI) traverse the membrane as a helical segment.

Belongs to the glycosyltransferase 28 family.

The protein resides in the membrane. It carries out the reaction stromemycin aglycone + UDP-alpha-D-glucose = stromemycin + UDP + H(+). It functions in the pathway mycotoxin biosynthesis. Its function is as follows. UDP-glycosyltransferase; part of the gene cluster that mediates the biosynthesis of stromemycin, a depside C-glucoside with two unsaturated C9 side chains belonging to aromatic polyketide glycosides. Acts as the tailoring enzyme responsible for 3-C-glucosylation of bininalkenylresorcylic acid to yield stromemycin. In Talaromyces amestolkiae, this protein is UDP-glycosyltransferase.